Here is a 502-residue protein sequence, read N- to C-terminus: UDP-glucuronosyltransferase 2C1 (502 aa).

Asn-177 and Asn-288 each carry an N-linked (GlcNAc...) asparagine glycan. Residues 466-481 (VVVFLLTCVATIIFLA) traverse the membrane as a helical segment.

This sequence belongs to the UDP-glycosyltransferase family.

The protein resides in the microsome membrane. It localises to the endoplasmic reticulum membrane. The enzyme catalyses glucuronate acceptor + UDP-alpha-D-glucuronate = acceptor beta-D-glucuronoside + UDP + H(+). Its function is as follows. UDPGT is of major importance in the conjugation and subsequent elimination of potentially toxic xenobiotics and endogenous compounds. The polypeptide is UDP-glucuronosyltransferase 2C1 (UGT2C1) (Oryctolagus cuniculus (Rabbit)).